The following is a 200-amino-acid chain: Endochitinase (200 aa).

The Proton donor role is filled by Glu-58.

Belongs to the glycosyl hydrolase 19 family. Chitinase class I subfamily.

The catalysed reaction is Random endo-hydrolysis of N-acetyl-beta-D-glucosaminide (1-&gt;4)-beta-linkages in chitin and chitodextrins.. Functionally, this protein functions as a defense against chitin-containing fungal pathogens. In Avena sativa (Oat), this protein is Endochitinase.